A 265-amino-acid chain; its full sequence is Mlc titration factor A (265 aa).

His111, His148, His152, and Glu211 together coordinate Zn(2+).

It belongs to the MtfA family. In terms of assembly, interacts with Mlc. Requires Zn(2+) as cofactor.

The protein resides in the cytoplasm. Involved in the modulation of the activity of the glucose-phosphotransferase system (glucose-PTS). Interacts with the transcriptional repressor Mlc, preventing its interaction with DNA and leading to the modulation of expression of genes regulated by Mlc, including ptsG, which encodes the PTS system glucose-specific EIICB component. In terms of biological role, shows zinc-dependent metallopeptidase activity. The chain is Mlc titration factor A from Escherichia coli (strain 55989 / EAEC).